A 482-amino-acid chain; its full sequence is Dual specificity protein phosphatase 10 (482 aa).

In terms of domain architecture, Rhodanese spans 168-285 (PSQGPVIIDC…FKQNHENLCD (118 aa)). The interaction with MAP kinases stretch occupies residues 199 to 215 (KISRRRLQQGKITVLDL). The 144-residue stretch at 321-464 (ELTPILPFLF…LLEFEEDLNN (144 aa)) folds into the Tyrosine-protein phosphatase domain. Catalysis depends on Cys-408, which acts as the Phosphocysteine intermediate.

It belongs to the protein-tyrosine phosphatase family. Non-receptor class dual specificity subfamily. In terms of assembly, monomer. Interacts with MAPK14. Expressed in keratinocytes (at protein level). Detected in brain.

It is found in the cytoplasm. Its subcellular location is the nucleus. It carries out the reaction O-phospho-L-tyrosyl-[protein] + H2O = L-tyrosyl-[protein] + phosphate. The catalysed reaction is O-phospho-L-seryl-[protein] + H2O = L-seryl-[protein] + phosphate. The enzyme catalyses O-phospho-L-threonyl-[protein] + H2O = L-threonyl-[protein] + phosphate. Protein phosphatase involved in the inactivation of MAP kinases. Has a specificity for the MAPK11/MAPK12/MAPK13/MAPK14 subfamily. It preferably dephosphorylates p38. The sequence is that of Dual specificity protein phosphatase 10 (DUSP10) from Homo sapiens (Human).